We begin with the raw amino-acid sequence, 521 residues long: Bifunctional purine biosynthesis protein PurH (521 aa).

Residues 1 to 147 (MAKITRALIS…KNNADVTVVV (147 aa)) enclose the MGS-like domain.

Belongs to the PurH family.

It catalyses the reaction (6R)-10-formyltetrahydrofolate + 5-amino-1-(5-phospho-beta-D-ribosyl)imidazole-4-carboxamide = 5-formamido-1-(5-phospho-D-ribosyl)imidazole-4-carboxamide + (6S)-5,6,7,8-tetrahydrofolate. It carries out the reaction IMP + H2O = 5-formamido-1-(5-phospho-D-ribosyl)imidazole-4-carboxamide. The protein operates within purine metabolism; IMP biosynthesis via de novo pathway; 5-formamido-1-(5-phospho-D-ribosyl)imidazole-4-carboxamide from 5-amino-1-(5-phospho-D-ribosyl)imidazole-4-carboxamide (10-formyl THF route): step 1/1. Its pathway is purine metabolism; IMP biosynthesis via de novo pathway; IMP from 5-formamido-1-(5-phospho-D-ribosyl)imidazole-4-carboxamide: step 1/1. In Geobacter metallireducens (strain ATCC 53774 / DSM 7210 / GS-15), this protein is Bifunctional purine biosynthesis protein PurH.